Here is a 287-residue protein sequence, read N- to C-terminus: Acetyl-coenzyme A carboxylase carboxyl transferase subunit beta (287 aa).

A CoA carboxyltransferase N-terminal domain is found at 36 to 287 (MWVKCDRCGK…KVLYKILELH (252 aa)). C40, C43, C59, and C62 together coordinate Zn(2+). The C4-type zinc-finger motif lies at 40-62 (CDRCGKTLYKKDLDENLKVCKFC).

Belongs to the AccD/PCCB family. Acetyl-CoA carboxylase is a heterohexamer composed of biotin carboxyl carrier protein (AccB), biotin carboxylase (AccC) and two subunits each of ACCase subunit alpha (AccA) and ACCase subunit beta (AccD). The cofactor is Zn(2+).

The protein localises to the cytoplasm. The catalysed reaction is N(6)-carboxybiotinyl-L-lysyl-[protein] + acetyl-CoA = N(6)-biotinyl-L-lysyl-[protein] + malonyl-CoA. It functions in the pathway lipid metabolism; malonyl-CoA biosynthesis; malonyl-CoA from acetyl-CoA: step 1/1. In terms of biological role, component of the acetyl coenzyme A carboxylase (ACC) complex. Biotin carboxylase (BC) catalyzes the carboxylation of biotin on its carrier protein (BCCP) and then the CO(2) group is transferred by the transcarboxylase to acetyl-CoA to form malonyl-CoA. The protein is Acetyl-coenzyme A carboxylase carboxyl transferase subunit beta of Clostridium novyi (strain NT).